The primary structure comprises 480 residues: MEWEAVIGLEVHVQLATKSKIFSGAATTFGAEPNTQACAVDLAMPGMLPVMNEEAVRMAVMFGLAIGAEINTRSVFDRKNYFYPDLPKGYQISQLDHPTVKQGKLDIQLENGEKKTITVTRAHLEEDAGKSLHEDFHGMTGIDLNRAGTPLLEIVSEPELRSAKEAVAYLRKLHSIVTYLGISDGDMSQGSMRCDCNVSVRPKGQKEFGVRTEIKNVNSFRFVEKAIQGEIERQIDLIEEGGKVTQETRLYDADKDNTRSMRSKEFANDYRYFPDPDLLPIEIDDAYIEAVRSTLPELPEQKLARFCSEYGLSDYDAGVLASSRAQADYFEAATKIVGDAKLTANWIMGELAKRLNQNSLDISQSPVTAEGLGKLLLRLKDNTINGKAAKDVLEAMWNGEGEADEIIEKKGLIAVTDDSAIEAFVDEVLANNAAQVEQYKAADEAKRGKMIGFFVGQTMKISKGKANPQQVNEILAKKLS.

Belongs to the GatB/GatE family. GatB subfamily. Heterotrimer of A, B and C subunits.

It carries out the reaction L-glutamyl-tRNA(Gln) + L-glutamine + ATP + H2O = L-glutaminyl-tRNA(Gln) + L-glutamate + ADP + phosphate + H(+). The catalysed reaction is L-aspartyl-tRNA(Asn) + L-glutamine + ATP + H2O = L-asparaginyl-tRNA(Asn) + L-glutamate + ADP + phosphate + 2 H(+). Its function is as follows. Allows the formation of correctly charged Asn-tRNA(Asn) or Gln-tRNA(Gln) through the transamidation of misacylated Asp-tRNA(Asn) or Glu-tRNA(Gln) in organisms which lack either or both of asparaginyl-tRNA or glutaminyl-tRNA synthetases. The reaction takes place in the presence of glutamine and ATP through an activated phospho-Asp-tRNA(Asn) or phospho-Glu-tRNA(Gln). This Hahella chejuensis (strain KCTC 2396) protein is Aspartyl/glutamyl-tRNA(Asn/Gln) amidotransferase subunit B.